Here is a 343-residue protein sequence, read N- to C-terminus: Glucokinase (343 aa).

18 to 23 (GDIGGT) is a binding site for ATP.

It belongs to the bacterial glucokinase family.

It is found in the cytoplasm. It carries out the reaction D-glucose + ATP = D-glucose 6-phosphate + ADP + H(+). The chain is Glucokinase from Brucella melitensis biotype 1 (strain ATCC 23456 / CCUG 17765 / NCTC 10094 / 16M).